Reading from the N-terminus, the 370-residue chain is Doublesex- and mab-3-related transcription factor C2 (370 aa).

Residues Met-1–Arg-38 form a disordered region. The DM DNA-binding region spans Cys-42–Arg-89. The interval Ala-334 to Val-356 is disordered.

Belongs to the DMRT family. In terms of tissue distribution, expressed in testis. Highly expressed in ovary.

It is found in the nucleus. Its function is as follows. May be involved in sexual development. The protein is Doublesex- and mab-3-related transcription factor C2 (Dmrtc2) of Mus musculus (Mouse).